We begin with the raw amino-acid sequence, 150 residues long: Large ribosomal subunit protein bL9 (150 aa).

It belongs to the bacterial ribosomal protein bL9 family.

Functionally, binds to the 23S rRNA. The protein is Large ribosomal subunit protein bL9 of Pectobacterium atrosepticum (strain SCRI 1043 / ATCC BAA-672) (Erwinia carotovora subsp. atroseptica).